Here is a 225-residue protein sequence, read N- to C-terminus: Uridylate kinase (225 aa).

ATP is bound at residue 9 to 10 (GS). Gly-43 provides a ligand contact to UMP. Residues Gly-44 and Arg-48 each coordinate ATP. Residues Asp-65 and 113–119 (TEPAHST) each bind UMP. 3 residues coordinate ATP: Thr-139, Tyr-145, and Asp-148.

The protein belongs to the UMP kinase family. In terms of assembly, homohexamer.

The protein resides in the cytoplasm. It catalyses the reaction UMP + ATP = UDP + ADP. Its pathway is pyrimidine metabolism; CTP biosynthesis via de novo pathway; UDP from UMP (UMPK route): step 1/1. Its activity is regulated as follows. Inhibited by UTP. Catalyzes the reversible phosphorylation of UMP to UDP. The sequence is that of Uridylate kinase from Methanobrevibacter smithii (strain ATCC 35061 / DSM 861 / OCM 144 / PS).